A 218-amino-acid chain; its full sequence is NAD(P)H-quinone oxidoreductase subunit I (218 aa).

4Fe-4S ferredoxin-type domains lie at 55–84 (GRIH…VDWV) and 95–124 (RNYS…MTEE). The [4Fe-4S] cluster site is built by C64, C67, C70, C74, C104, C107, C110, and C114. The interval 169 to 218 (MDPHDVPANQPRAGQLPAEALKSLSLQQESVQGDEGESLQDASDQDQPSG) is disordered. Residues 208-218 (QDASDQDQPSG) show a composition bias toward polar residues.

Belongs to the complex I 23 kDa subunit family. As to quaternary structure, NDH-1 is composed of at least 11 different subunits. The cofactor is [4Fe-4S] cluster.

It localises to the cellular thylakoid membrane. It carries out the reaction a plastoquinone + NADH + (n+1) H(+)(in) = a plastoquinol + NAD(+) + n H(+)(out). The enzyme catalyses a plastoquinone + NADPH + (n+1) H(+)(in) = a plastoquinol + NADP(+) + n H(+)(out). Its function is as follows. NDH-1 shuttles electrons from an unknown electron donor, via FMN and iron-sulfur (Fe-S) centers, to quinones in the respiratory and/or the photosynthetic chain. The immediate electron acceptor for the enzyme in this species is believed to be plastoquinone. Couples the redox reaction to proton translocation, and thus conserves the redox energy in a proton gradient. This Prochlorococcus marinus (strain MIT 9313) protein is NAD(P)H-quinone oxidoreductase subunit I.